Here is a 151-residue protein sequence, read N- to C-terminus: UPF0178 protein CJA_1978 (151 aa).

It belongs to the UPF0178 family.

The sequence is that of UPF0178 protein CJA_1978 from Cellvibrio japonicus (strain Ueda107) (Pseudomonas fluorescens subsp. cellulosa).